The following is a 197-amino-acid chain: Small ribosomal subunit protein uS4 (197 aa).

The 63-residue stretch at 88 to 150 folds into the S4 RNA-binding domain; sequence SRLDNLVYRM…AKSLEIILDN (63 aa).

This sequence belongs to the universal ribosomal protein uS4 family. As to quaternary structure, part of the 30S ribosomal subunit. Contacts protein S5. The interaction surface between S4 and S5 is involved in control of translational fidelity.

Its function is as follows. One of the primary rRNA binding proteins, it binds directly to 16S rRNA where it nucleates assembly of the body of the 30S subunit. With S5 and S12 plays an important role in translational accuracy. This is Small ribosomal subunit protein uS4 from Azobacteroides pseudotrichonymphae genomovar. CFP2.